Here is a 358-residue protein sequence, read N- to C-terminus: Peptide chain release factor 1 (358 aa).

At Gln234 the chain carries N5-methylglutamine.

This sequence belongs to the prokaryotic/mitochondrial release factor family. Post-translationally, methylated by PrmC. Methylation increases the termination efficiency of RF1.

The protein localises to the cytoplasm. In terms of biological role, peptide chain release factor 1 directs the termination of translation in response to the peptide chain termination codons UAG and UAA. The protein is Peptide chain release factor 1 of Akkermansia muciniphila (strain ATCC BAA-835 / DSM 22959 / JCM 33894 / BCRC 81048 / CCUG 64013 / CIP 107961 / Muc).